The following is a 744-amino-acid chain: Prestin (744 aa).

Topologically, residues 1-75 (MDHAEENEIL…PITKWLPAYK (75 aa)) are cytoplasmic. Residues 76–105 (FKEYVLGDLVSGISTGVLQLPQGLAFAMLA) traverse the membrane as a helical segment. Over 106–108 (AVP) the chain is Extracellular. Residues 109-126 (PIFGLYSSFYPVIMYCFL) form a helical membrane-spanning segment. Residues 127-137 (GTSRHISIGPF) lie on the Cytoplasmic side of the membrane. Residues 138-151 (AVISLMIGGVAVRL) traverse the membrane as a helical segment. Topologically, residues 152–168 (VPDDIVIPGGVNATNGT) are extracellular. An Involved in motor function motif is present at residues 158–168 (IPGGVNATNGT). N-linked (GlcNAc...) asparagine glycosylation is found at asparagine 163 and asparagine 166. Residues 169–196 (EARDALRVKVAMSVTLLSGIIQFCLGVC) traverse the membrane as a helical segment. Residues 197-206 (RFGFVAIYLT) are Cytoplasmic-facing. A helical membrane pass occupies residues 207–230 (EPLVRGFTTAAAVHVFTSMLKYLF). The Extracellular segment spans residues 231–241 (GVKTKRYSGIF). Positions 242–253 (SVVYSTVAVLQN) form an intramembrane region, helical. The Extracellular portion of the chain corresponds to 254–258 (VKNLN). Residues 259–282 (VCSLGVGLMVFGLLLGGKEFNERF) traverse the membrane as a helical segment. Over 283–291 (KEKLPAPIP) the chain is Cytoplasmic. A helical membrane pass occupies residues 292 to 307 (LEFFAVVMGTGISAGF). The Extracellular segment spans residues 308-332 (NLKESYNVDVVGTLPLGLLPPANPD). A helical membrane pass occupies residues 333–367 (TSLFHLVYVDAIAIAIVGFSVTISMAKTLANKHGY). Residues 368–370 (QVD) are Cytoplasmic-facing. The helical transmembrane segment at 371–388 (GNQELIALGLCNSIGSLF) threads the bilayer. Residues 389-396 (QTFSISCS) are Extracellular-facing. Residues 397-406 (LSRSLVQEGT) traverse the membrane as a helical segment. Serine 398 lines the salicylate pocket. Residues 407–410 (GGKT) lie on the Cytoplasmic side of the membrane. The chain crosses the membrane as a helical span at residues 411 to 432 (QLAGCLASLMILLVILATGFLF). At 433–436 (ESLP) the chain is on the extracellular side. A helical membrane pass occupies residues 437–464 (QAVLSAIVIVNLKGMFMQFSDLPFFWRT). Position 465 (serine 465) is a topological domain, cytoplasmic. The chain crosses the membrane as a helical span at residues 466–481 (KIELTIWLTTFVSSLF). The Extracellular portion of the chain corresponds to 482–483 (LG). A helical membrane pass occupies residues 484–504 (LDYGLITAVIIALLTVIYRTQ). Residues 505 to 718 (SPSYKVLGKL…AVLGSQLREA (214 aa)) are extended region for STAS domain. Residues 505-744 (SPSYKVLGKL…PNATPATPEA (240 aa)) are Cytoplasmic-facing. An STAS domain is found at 525–713 (AYEEVKEIPG…HSIHDAVLGS (189 aa)). The disordered stretch occupies residues 718-744 (ALAEQEASAPPSQEDLEPNATPATPEA).

It belongs to the SLC26A/SulP transporter (TC 2.A.53) family. Homodimer. Interacts (via STAS domain) with CALM; this interaction is calcium-dependent and the STAS domain interacts with only one lobe of CALM which is an elongated conformation. Interacts with MYH1.

It localises to the lateral cell membrane. The catalysed reaction is 2 hydrogencarbonate(in) + chloride(out) = 2 hydrogencarbonate(out) + chloride(in). Its function is as follows. Voltage-sensitive motor protein that drives outer hair cell (OHC) electromotility (eM) and participates in sound amplification in the hearing organ. Converts changes in the transmembrane electric potential into mechanical displacements resulting in the coupling of its expansion to movement of a charged voltage sensor across the lipid membrane. The nature of the voltage sensor is not completely clear, and two models compete. In the first model, acts as an incomplete transporter where intracellular chloride anion acts as extrinsic voltage sensor that drives conformational change in the protein which is sufficient to produce a length change in the plane of the membrane and hence in the length of the OHC. The second model in which multiple charged amino acid residues are distributed at the intracellular and extracellular membrane interfaces that form an intrinsic voltage sensor, whose movement produces the non-linear capacitance (NLC). However, the effective voltage sensor may be the result of a hybrid voltage sensor, assembled from intrinsic charge (charged residues) and extrinsic charge (bound anion). Notably, binding of anions to the anion-binding pocket partially neutralizes the intrinsic positive charge rather than to form an electrically negative sensor, therefore remaining charge may serve as voltage sensor that, after depolarization, moves from down (expanded state) to up (contracted) conformation, which is accompanied by an eccentric contraction of the intermembrane cross-sectional area of the protein as well as a major increase in the hydrophobic thickness of the protein having as consequences the plasma membrane thickening and the cell contraction after membrane depolarization. The anion-binding pocket transits from the inward-open (Down) state, where it is exposed toward the intracellular solvent in the absence of anion, to the occluded (Up) state upon anion binding. Salicylate competes for the anion-binding site and inhibits the voltage-sensor movement, and therefore inhibits the charge transfer and electromotility by displacing Cl(-) from the anion-binding site and by preventing the structural transitions to the contracted state. In addition, can act as a weak Cl(-)/HCO3(-) antiporter across the cell membrane and so regulate the intracellular pH of the outer hair cells (OHCs), while firstly found as being unable to mediate electrogenic anion transport. Moreover, supports a role in cardiac mechanical amplification serving as an elastic element to enhance the actomyosin- based sarcomere contraction system. The polypeptide is Prestin (Homo sapiens (Human)).